The primary structure comprises 101 residues: A-type ATP synthase subunit K (101 aa).

A run of 3 helical transmembrane segments spans residues 5–25 (WLPF…AQAP), 37–57 (IGAG…VGMA), and 75–95 (ILIF…FAVL).

It belongs to the V-ATPase proteolipid subunit family. In terms of assembly, has multiple subunits with at least A(3), B(3), C, D, E, F, H, I and proteolipid K(x). In terms of processing, the N-terminus is blocked.

The protein resides in the cell membrane. Functionally, component of the A-type ATP synthase that produces ATP from ADP in the presence of a proton gradient across the membrane. The sequence is that of A-type ATP synthase subunit K from Sulfurisphaera tokodaii (strain DSM 16993 / JCM 10545 / NBRC 100140 / 7) (Sulfolobus tokodaii).